A 234-amino-acid chain; its full sequence is Uridylate kinase (234 aa).

Residue 9–12 (KLSG) coordinates ATP. Gly-51 provides a ligand contact to UMP. ATP-binding residues include Gly-52 and Arg-56. UMP contacts are provided by residues Asp-71 and 132–139 (CGNPFFTT). Positions 159, 165, and 168 each coordinate ATP.

Belongs to the UMP kinase family. Homohexamer.

Its subcellular location is the cytoplasm. It carries out the reaction UMP + ATP = UDP + ADP. Its pathway is pyrimidine metabolism; CTP biosynthesis via de novo pathway; UDP from UMP (UMPK route): step 1/1. Its activity is regulated as follows. Inhibited by UTP. Catalyzes the reversible phosphorylation of UMP to UDP. The chain is Uridylate kinase from Prochlorococcus marinus subsp. pastoris (strain CCMP1986 / NIES-2087 / MED4).